We begin with the raw amino-acid sequence, 188 residues long: Pterocarpan synthase 1 (188 aa).

An N-terminal signal peptide occupies residues 1–23 (MAKSTTFFISLTLPFLLLSVVTA). A glycan (N-linked (GlcNAc...) asparagine) is linked at N127.

This sequence belongs to the plant dirigent protein family. Homodimer.

Its subcellular location is the secreted. The protein localises to the extracellular space. The protein resides in the apoplast. The catalysed reaction is a (4R)-4,2'-dihydroxyisoflavan = a pterocarpan + H2O.. It catalyses the reaction (3R,4R)-7,2'-dihydroxy-4'-methoxyisoflavanol = (-)-medicarpin + H2O. The enzyme catalyses (3S,4R)-7,2'-dihydroxy-4'-methoxyisoflavanol = (+)-medicarpin + H2O. It carries out the reaction (3R,4R)-3-(6-hydroxy-1,3-benzodioxol-5-yl)-3,4-dihydro-2H-chromene-4,7-diol = (-)-maackiain + H2O. The catalysed reaction is (3R,4R)-7,2',4'-trihydroxyisoflavanol = (6aR,11aR)-3,9-dihydroxypterocarpan + H2O. Involved in pterocarpan phytoalexin biosynthesis. Catalyzes the last step in the biosynthesis of the phytoalexin medicarpin, and thereby contributes to plant defense reactions. Dirigent proteins impart stereoselectivity on the phenoxy radical-coupling reaction, yielding optically active lignans from two molecules of coniferyl alcohol in the biosynthesis of lignans, flavonolignans, and alkaloids and thus plays a central role in plant secondary metabolism. This Glycyrrhiza echinata (Licorice) protein is Pterocarpan synthase 1.